Reading from the N-terminus, the 336-residue chain is N-lysine methyltransferase KMT5A-B (336 aa).

Disordered stretches follow at residues M1–Q107 and Q141–L165. Basic and acidic residues predominate over residues S67–R93. The span at S95–S104 shows a compositional bias: polar residues. Basic residues predominate over residues V146–N162. The SET domain maps to D200–G321. Residues K210–R212, Y255, and N282–H283 each bind S-adenosyl-L-methionine.

Belongs to the class V-like SAM-binding methyltransferase superfamily. Histone-lysine methyltransferase family. PR/SET subfamily. In terms of processing, phosphorylated during mitosis.

It localises to the nucleus. The protein resides in the chromosome. It catalyses the reaction L-lysyl(20)-[histone H4] + S-adenosyl-L-methionine = N(6)-methyl-L-lysyl(20)-[histone H4] + S-adenosyl-L-homocysteine + H(+). It carries out the reaction L-lysyl-[protein] + S-adenosyl-L-methionine = N(6)-methyl-L-lysyl-[protein] + S-adenosyl-L-homocysteine + H(+). Its function is as follows. Protein-lysine N-methyltransferase that monomethylates both histones and non-histone proteins. Specifically monomethylates 'Lys-20' of histone H4 (H4K20me1). H4K20me1 is enriched during mitosis and represents a specific tag for epigenetic transcriptional repression. Mainly functions in euchromatin regions, thereby playing a central role in the silencing of euchromatic genes. Required for cell proliferation, probably by contributing to the maintenance of proper higher-order structure of DNA during mitosis. Involved in chromosome condensation and proper cytokinesis. In Xenopus laevis (African clawed frog), this protein is N-lysine methyltransferase KMT5A-B.